The primary structure comprises 50 residues: Omwaprin-a (50 aa).

A WAP domain is found at 3–47 (RPKKPGLCPPRPQKPCVKECKNDDSCPGQQKCCNYGCKDECRDPI). 4 disulfides stabilise this stretch: Cys10–Cys35, Cys18–Cys39, Cys22–Cys34, and Cys28–Cys43.

The protein belongs to the venom waprin family. As to expression, expressed by the venom gland.

The protein resides in the secreted. In terms of biological role, damages membranes of susceptible bacteria. Has antibacterial activity against the Gram-positive bacteria B.megaterium and S.warneri. After a 45-minute treatment with this protein, B.megaterium have no visible pili and are smooth. Has no antibacterial activity against the Gram-positive bacteria B.thuringiensis, S.aureus, S.clavuligerus and B.anthracis, or the Gram-negative bacteria E.coli and A.tumefaciens. Has no hemolytic activity. Does not inhibit the proteinases elastase and cathepsin G. Is not toxic to mice. The sequence is that of Omwaprin-a from Oxyuranus microlepidotus (Inland taipan).